We begin with the raw amino-acid sequence, 376 residues long: uncharacterized protein (376 aa).

A helical transmembrane segment spans residues 24–44 (YLSIISIISVFLLNSSIVYSC). His251 serves as a coordination point for Zn(2+).

Belongs to the peptidase M23B family. It depends on Zn(2+) as a cofactor.

The protein localises to the cell membrane. This is an uncharacterized protein from Buchnera aphidicola subsp. Baizongia pistaciae (strain Bp).